Here is a 310-residue protein sequence, read N- to C-terminus: Thioredoxin reductase (310 aa).

Position 34–41 (34–41) interacts with FAD; the sequence is NGMQPGGQ. C135 and C138 form a disulfide bridge. Residue 281 to 290 participates in FAD binding; the sequence is DVQDKIYRQA.

The protein belongs to the class-II pyridine nucleotide-disulfide oxidoreductase family. As to quaternary structure, homodimer. Requires FAD as cofactor.

The protein resides in the cytoplasm. It carries out the reaction [thioredoxin]-dithiol + NADP(+) = [thioredoxin]-disulfide + NADPH + H(+). This is Thioredoxin reductase (trxB) from Rickettsia felis (strain ATCC VR-1525 / URRWXCal2) (Rickettsia azadi).